The primary structure comprises 357 residues: UDP-3-O-acylglucosamine N-acyltransferase (357 aa).

Histidine 251 functions as the Proton acceptor in the catalytic mechanism.

This sequence belongs to the transferase hexapeptide repeat family. LpxD subfamily. As to quaternary structure, homotrimer.

It catalyses the reaction a UDP-3-O-[(3R)-3-hydroxyacyl]-alpha-D-glucosamine + a (3R)-hydroxyacyl-[ACP] = a UDP-2-N,3-O-bis[(3R)-3-hydroxyacyl]-alpha-D-glucosamine + holo-[ACP] + H(+). It functions in the pathway bacterial outer membrane biogenesis; LPS lipid A biosynthesis. Catalyzes the N-acylation of UDP-3-O-acylglucosamine using 3-hydroxyacyl-ACP as the acyl donor. Is involved in the biosynthesis of lipid A, a phosphorylated glycolipid that anchors the lipopolysaccharide to the outer membrane of the cell. The sequence is that of UDP-3-O-acylglucosamine N-acyltransferase from Ralstonia pickettii (strain 12J).